We begin with the raw amino-acid sequence, 472 residues long: Trigger factor (472 aa).

The region spanning 174–261 (GDIAVLGFKG…LKDLKTRELP (88 aa)) is the PPIase FKBP-type domain. Residues 430–472 (ENSTLTEQAPAADDADDAEKPAAKKKPAAKKKTPAKSKTDAEA) form a disordered region. Over residues 452–464 (AKKKPAAKKKTPA) the composition is skewed to basic residues.

The protein belongs to the FKBP-type PPIase family. Tig subfamily.

It is found in the cytoplasm. The enzyme catalyses [protein]-peptidylproline (omega=180) = [protein]-peptidylproline (omega=0). In terms of biological role, involved in protein export. Acts as a chaperone by maintaining the newly synthesized protein in an open conformation. Functions as a peptidyl-prolyl cis-trans isomerase. In Parasynechococcus marenigrum (strain WH8102), this protein is Trigger factor.